A 195-amino-acid polypeptide reads, in one-letter code: Interferon omega-1 (195 aa).

Positions methionine 1–serine 23 are cleaved as a signal peptide. 2 disulfides stabilise this stretch: cysteine 24/cysteine 122 and cysteine 52/cysteine 162. An N-linked (GlcNAc...) asparagine glycan is attached at asparagine 101.

It belongs to the alpha/beta interferon family.

The protein resides in the secreted. This is Interferon omega-1 from Equus caballus (Horse).